The primary structure comprises 181 residues: Large ribosomal subunit protein uL16 (181 aa).

Belongs to the universal ribosomal protein uL16 family.

The protein is Large ribosomal subunit protein uL16 of Pyrococcus horikoshii (strain ATCC 700860 / DSM 12428 / JCM 9974 / NBRC 100139 / OT-3).